The following is a 341-amino-acid chain: Phenylalanine--tRNA ligase alpha subunit (341 aa).

Mg(2+) is bound at residue glutamate 256.

This sequence belongs to the class-II aminoacyl-tRNA synthetase family. Phe-tRNA synthetase alpha subunit type 1 subfamily. In terms of assembly, tetramer of two alpha and two beta subunits. Mg(2+) serves as cofactor.

It is found in the cytoplasm. It catalyses the reaction tRNA(Phe) + L-phenylalanine + ATP = L-phenylalanyl-tRNA(Phe) + AMP + diphosphate + H(+). This is Phenylalanine--tRNA ligase alpha subunit from Leptospira borgpetersenii serovar Hardjo-bovis (strain JB197).